The chain runs to 60 residues: Large ribosomal subunit protein bL32 (60 aa).

The segment at 1-21 is disordered; it reads MAVPARHTSKAKKNKRRTHYK. The span at 7-20 shows a compositional bias: basic residues; the sequence is HTSKAKKNKRRTHY.

It belongs to the bacterial ribosomal protein bL32 family.

The polypeptide is Large ribosomal subunit protein bL32 (Streptococcus uberis (strain ATCC BAA-854 / 0140J)).